A 493-amino-acid polypeptide reads, in one-letter code: Amphoterin-induced protein 1 (493 aa).

The signal sequence occupies residues 1–27; it reads MHPHRDPRGLWLLLPSLSLLLFEVARA. Positions 28 to 61 constitute an LRRNT domain; the sequence is GRAVVSCPAACLCASNILSCSKQQLPNVPHSLPS. The Extracellular portion of the chain corresponds to 28–372; it reads GRAVVSCPAA…LHGHHDTLNT (345 aa). Cystine bridges form between Cys34/Cys40 and Cys38/Cys47. LRR repeat units lie at residues 62–83, 87–108, 111–132, 135–156, 159–179, and 186–206; these read YTALLDLSHNNLSRLRAEWTPT, QLHSLLLSHNHLNFISSEAFSP, NLRYLDLSSNQLRTLDEFLFSD, VLEVLLLYNNHIMAVDRCAFDD, QLQKLYLSQNQISRFPLELVK, and KLTLLDLSSNKLKNLPLPDLQ. An N-linked (GlcNAc...) asparagine glycan is attached at Asn72. Residues 221–272 enclose the LRRCT domain; that stretch reads NPLNCDCELYQLFSHWQYRQLSSVMDFQEDLYCMNSKKLHNVFNLSFLNCGE. 3 cysteine pairs are disulfide-bonded: Cys225–Cys253, Cys227–Cys270, and Cys290–Cys341. Residues Asn264, Asn315, Asn349, and Asn360 are each glycosylated (N-linked (GlcNAc...) asparagine). The Ig-like C2-type domain maps to 269–353; it reads NCGEYKERAW…MGETFNETLS (85 aa). The helical transmembrane segment at 373–393 threads the bilayer; sequence AYTTLVGCILSVVLVLIYLYL. Residues 394 to 493 lie on the Cytoplasmic side of the membrane; the sequence is TPCRCWCRGV…SVFSDTPIVV (100 aa). The tract at residues 405–493 is disordered; it reads KPSSHQGDSL…SVFSDTPIVV (89 aa). Over residues 408-424 the composition is skewed to polar residues; sequence SHQGDSLSSSMLSTTPN. Residues 431–442 are compositionally biased toward basic and acidic residues; the sequence is GDKDDGFDRRVA. Residues Ser477 and Ser481 each carry the phosphoserine modification.

This sequence belongs to the immunoglobulin superfamily. AMIGO family. Homodimer, and heterodimer with AMIGO2 and AMIGO3. Interacts with KCNB1.

The protein localises to the cell membrane. Its subcellular location is the perikaryon. It localises to the cell projection. It is found in the dendrite. The protein resides in the axon. Functionally, promotes growth and fasciculation of neurites from cultured hippocampal neurons. May be involved in fasciculation as well as myelination of developing neural axons. May have a role in regeneration as well as neural plasticity in the adult nervous system. May mediate homophilic as well as heterophilic cell-cell interaction and contribute to signal transduction through its intracellular domain. Assembled with KCNB1 modulates the gating characteristics of the delayed rectifier voltage-dependent potassium channel KCNB1. This chain is Amphoterin-induced protein 1, found in Homo sapiens (Human).